We begin with the raw amino-acid sequence, 734 residues long: Photosystem I P700 chlorophyll a apoprotein A2 (734 aa).

Helical transmembrane passes span 46-69 (IFAS…FHVA), 135-158 (LYTG…LHLQ), 175-199 (LNHH…HVAI), 273-291 (IAHH…GHMY), 330-353 (IHFQ…QHMY), 369-395 (AALY…IFFI), 417-439 (AIIS…LYVH), and 517-535 (FLVH…LILV). The [4Fe-4S] cluster site is built by Cys559 and Cys568. 2 helical membrane passes run 575–596 (AFYL…YWHW) and 643–665 (LSVW…MFLI). Residues His654, Met662, and Tyr670 each coordinate chlorophyll a. Trp671 is a binding site for phylloquinone. A helical membrane pass occupies residues 707–727 (LVGLAHFSVGYIFTYAAFLIA).

Belongs to the PsaA/PsaB family. As to quaternary structure, the PsaA/B heterodimer binds the P700 chlorophyll special pair and subsequent electron acceptors. PSI consists of a core antenna complex that captures photons, and an electron transfer chain that converts photonic excitation into a charge separation. The eukaryotic PSI reaction center is composed of at least 11 subunits. P700 is a chlorophyll a/chlorophyll a' dimer, A0 is one or more chlorophyll a, A1 is one or both phylloquinones and FX is a shared 4Fe-4S iron-sulfur center. serves as cofactor.

It localises to the plastid. Its subcellular location is the chloroplast thylakoid membrane. It carries out the reaction reduced [plastocyanin] + hnu + oxidized [2Fe-2S]-[ferredoxin] = oxidized [plastocyanin] + reduced [2Fe-2S]-[ferredoxin]. PsaA and PsaB bind P700, the primary electron donor of photosystem I (PSI), as well as the electron acceptors A0, A1 and FX. PSI is a plastocyanin-ferredoxin oxidoreductase, converting photonic excitation into a charge separation, which transfers an electron from the donor P700 chlorophyll pair to the spectroscopically characterized acceptors A0, A1, FX, FA and FB in turn. Oxidized P700 is reduced on the lumenal side of the thylakoid membrane by plastocyanin. The polypeptide is Photosystem I P700 chlorophyll a apoprotein A2 (Calycanthus floridus var. glaucus (Eastern sweetshrub)).